The primary structure comprises 545 residues: MAAKEVVFGNDARVKMLAGVNILANAVKVTLGPKGRNVVLEKSFGAPLITKDGVSVAKEIELEDKFENMGAQMVKEVASKANDAAGDGTTTATVLAQAIVNEGLKAVAAGMNPMDLKRGIDKAVAAAVVELKALSQECADSKAIAQVGTISANSDESIGDIIATAMEKVGKEGVITVEEGQALENELDVVEGMQFDRGYLSPYFINKPETGAVELDNPFVLLVDKKISNIRELLPILEGLAKTGKPLLIVAEDVEGEALATLVVNNMRGIVKVAAVKAPGFGDRRKAMLQDIAILTGGTVIAEEIGLELEKATLEDLGTAKRVVITKDNTTIIDGNGAEEQIKARVGQIKQQIEETTSDYDREKLQERMAKLAGGVAVIKVGAATEVEMKEKKARVEDALHATRAAVEEGVVPGGGVALVRVASKIANVDVANEDQKHGVVIALRAMEAPLRQIATNAGEEASVVANTVKNGSGNFGYNAGNDSYGDMLEMGILDPTKVTRSALQFAASVAGLMITTEAMVAELPKADAPDMGGMGGGMGGMGMM.

ATP is bound by residues 30 to 33 (TLGP), Lys-51, 87 to 91 (DGTTT), Gly-415, and Asp-495.

The protein belongs to the chaperonin (HSP60) family. Forms a cylinder of 14 subunits composed of two heptameric rings stacked back-to-back. Interacts with the co-chaperonin GroES.

The protein localises to the cytoplasm. The catalysed reaction is ATP + H2O + a folded polypeptide = ADP + phosphate + an unfolded polypeptide.. Functionally, together with its co-chaperonin GroES, plays an essential role in assisting protein folding. The GroEL-GroES system forms a nano-cage that allows encapsulation of the non-native substrate proteins and provides a physical environment optimized to promote and accelerate protein folding. The protein is Chaperonin GroEL of Shewanella amazonensis (strain ATCC BAA-1098 / SB2B).